Consider the following 289-residue polypeptide: uncharacterized protein (289 aa).

This is an uncharacterized protein from Schizosaccharomyces pombe (strain 972 / ATCC 24843) (Fission yeast).